The chain runs to 34 residues: Protamine-Y1/Y2 (34 aa).

The segment at 1–34 is disordered; the sequence is PRRRRQASRPVRRRRRYRRSTAARRRRRVVRRRR.

As to expression, testis.

The protein localises to the nucleus. The protein resides in the chromosome. Its function is as follows. Protamines substitute for histones in the chromatin of sperm during the haploid phase of spermatogenesis. They compact sperm DNA into a highly condensed, stable and inactive complex. The chain is Protamine-Y1/Y2 from Thunnus thynnus (Atlantic bluefin tuna).